The following is a 92-amino-acid chain: Small ribosomal subunit protein uS19 (92 aa).

This sequence belongs to the universal ribosomal protein uS19 family.

Its function is as follows. Protein S19 forms a complex with S13 that binds strongly to the 16S ribosomal RNA. This chain is Small ribosomal subunit protein uS19, found in Bradyrhizobium diazoefficiens (strain JCM 10833 / BCRC 13528 / IAM 13628 / NBRC 14792 / USDA 110).